Here is a 216-residue protein sequence, read N- to C-terminus: GTP cyclohydrolase-2 (216 aa).

51 to 55 is a binding site for GTP; it reads RIHSE. The Zn(2+) site is built by cysteine 56, cysteine 67, and cysteine 69. Residues glutamine 72, 94–96, and threonine 116 each bind GTP; that span reads EGR. Aspartate 128 (proton acceptor) is an active-site residue. The active-site Nucleophile is arginine 130. Positions 151 and 156 each coordinate GTP.

It belongs to the GTP cyclohydrolase II family. Requires Zn(2+) as cofactor.

The enzyme catalyses GTP + 4 H2O = 2,5-diamino-6-hydroxy-4-(5-phosphoribosylamino)-pyrimidine + formate + 2 phosphate + 3 H(+). It functions in the pathway cofactor biosynthesis; riboflavin biosynthesis; 5-amino-6-(D-ribitylamino)uracil from GTP: step 1/4. Its function is as follows. Catalyzes the conversion of GTP to 2,5-diamino-6-ribosylamino-4(3H)-pyrimidinone 5'-phosphate (DARP), formate and pyrophosphate. In Haemophilus influenzae (strain PittEE), this protein is GTP cyclohydrolase-2.